The primary structure comprises 298 residues: MKRIGLFLLTNIAVLAVAMITMNLLGVGSYMQGTSLDLGNLFAFAAIIGFAGSFVSLAMSKWLAKMSVGAKVIKEPRNADEQWLVETVRRQAEKAGIGMPEVAIYEGAEPNAFATGMTKNSALVAVSTGLLRHMRQNEVEAVLGHEVAHIANGDMVTMALLQGVVNTFVIFFAKIVAYVVDRVVLKNESEGHSITFIVVDIVAQILFGILASMITMWFSRKREFHADNGGAYLAGKENMIAALQRLQTMQPGELPDQMAAFGISARPSNIGDLFRSHPPLEKRIEALRATTQDQLKVA.

A run of 2 helical transmembrane segments spans residues 4–24 and 38–58; these read IGLF…TMNL and LGNL…VSLA. His145 serves as a coordination point for Zn(2+). Residue Glu146 is part of the active site. His149 provides a ligand contact to Zn(2+). Helical transmembrane passes span 160-180 and 194-214; these read LLQG…AYVV and ITFI…ASMI. Position 223 (Glu223) interacts with Zn(2+).

Belongs to the peptidase M48B family. Zn(2+) is required as a cofactor.

The protein resides in the cell inner membrane. The protein is Protease HtpX of Hydrogenovibrio crunogenus (strain DSM 25203 / XCL-2) (Thiomicrospira crunogena).